A 184-amino-acid polypeptide reads, in one-letter code: MNKGNLIKNYAVALFNNAIVDNIQDKIFEEITSINRIITDNFDIREFLFSPIVNKNDKINAVNSLAKNIKISTIVQNFLLLLVKNSRTAILSNIVDAYNTLLYESKNIKIVQVISANKLQPKEQEWIKSRIEKELNQKTEILFDIDNTIIGGIVIKYDSMLQDYSIKGSLEKITKALKTVNIAV.

It belongs to the ATPase delta chain family. As to quaternary structure, F-type ATPases have 2 components, F(1) - the catalytic core - and F(0) - the membrane proton channel. F(1) has five subunits: alpha(3), beta(3), gamma(1), delta(1), epsilon(1). F(0) has three main subunits: a(1), b(2) and c(10-14). The alpha and beta chains form an alternating ring which encloses part of the gamma chain. F(1) is attached to F(0) by a central stalk formed by the gamma and epsilon chains, while a peripheral stalk is formed by the delta and b chains.

It is found in the cell inner membrane. Functionally, f(1)F(0) ATP synthase produces ATP from ADP in the presence of a proton or sodium gradient. F-type ATPases consist of two structural domains, F(1) containing the extramembraneous catalytic core and F(0) containing the membrane proton channel, linked together by a central stalk and a peripheral stalk. During catalysis, ATP synthesis in the catalytic domain of F(1) is coupled via a rotary mechanism of the central stalk subunits to proton translocation. This protein is part of the stalk that links CF(0) to CF(1). It either transmits conformational changes from CF(0) to CF(1) or is implicated in proton conduction. In Rickettsia rickettsii (strain Iowa), this protein is ATP synthase subunit delta.